The chain runs to 230 residues: Phosphoribosylformylglycinamidine synthase subunit PurQ (230 aa).

Positions 3–230 constitute a Glutamine amidotransferase type-1 domain; that stretch reads SAIIVFPGTN…LFQSIVESLS (228 aa). The Nucleophile role is filled by Cys87. Residues His204 and Glu206 contribute to the active site.

In terms of assembly, part of the FGAM synthase complex composed of 1 PurL, 1 PurQ and 2 PurS subunits.

It localises to the cytoplasm. The enzyme catalyses N(2)-formyl-N(1)-(5-phospho-beta-D-ribosyl)glycinamide + L-glutamine + ATP + H2O = 2-formamido-N(1)-(5-O-phospho-beta-D-ribosyl)acetamidine + L-glutamate + ADP + phosphate + H(+). It carries out the reaction L-glutamine + H2O = L-glutamate + NH4(+). It functions in the pathway purine metabolism; IMP biosynthesis via de novo pathway; 5-amino-1-(5-phospho-D-ribosyl)imidazole from N(2)-formyl-N(1)-(5-phospho-D-ribosyl)glycinamide: step 1/2. Functionally, part of the phosphoribosylformylglycinamidine synthase complex involved in the purines biosynthetic pathway. Catalyzes the ATP-dependent conversion of formylglycinamide ribonucleotide (FGAR) and glutamine to yield formylglycinamidine ribonucleotide (FGAM) and glutamate. The FGAM synthase complex is composed of three subunits. PurQ produces an ammonia molecule by converting glutamine to glutamate. PurL transfers the ammonia molecule to FGAR to form FGAM in an ATP-dependent manner. PurS interacts with PurQ and PurL and is thought to assist in the transfer of the ammonia molecule from PurQ to PurL. In Rhodospirillum rubrum (strain ATCC 11170 / ATH 1.1.1 / DSM 467 / LMG 4362 / NCIMB 8255 / S1), this protein is Phosphoribosylformylglycinamidine synthase subunit PurQ.